The sequence spans 114 residues: Chaperonin GroEL (114 aa).

22–26 (DGTTT) lines the ATP pocket.

Belongs to the chaperonin (HSP60) family. As to quaternary structure, forms a cylinder of 14 subunits composed of two heptameric rings stacked back-to-back. Interacts with the co-chaperonin GroES.

Its subcellular location is the cytoplasm. It catalyses the reaction ATP + H2O + a folded polypeptide = ADP + phosphate + an unfolded polypeptide.. Its function is as follows. Together with its co-chaperonin GroES, plays an essential role in assisting protein folding. The GroEL-GroES system forms a nano-cage that allows encapsulation of the non-native substrate proteins and provides a physical environment optimized to promote and accelerate protein folding. This chain is Chaperonin GroEL, found in Mycobacterium ulcerans.